Here is a 691-residue protein sequence, read N- to C-terminus: Elongation factor G (691 aa).

Positions 8 to 282 constitute a tr-type G domain; it reads EKTRNIGIMA…AVVDYLPSPV (275 aa). GTP contacts are provided by residues 17–24, 81–85, and 135–138; these read AHIDAGKT, DTPGH, and NKMD.

It belongs to the TRAFAC class translation factor GTPase superfamily. Classic translation factor GTPase family. EF-G/EF-2 subfamily.

The protein localises to the cytoplasm. Functionally, catalyzes the GTP-dependent ribosomal translocation step during translation elongation. During this step, the ribosome changes from the pre-translocational (PRE) to the post-translocational (POST) state as the newly formed A-site-bound peptidyl-tRNA and P-site-bound deacylated tRNA move to the P and E sites, respectively. Catalyzes the coordinated movement of the two tRNA molecules, the mRNA and conformational changes in the ribosome. The protein is Elongation factor G of Caldicellulosiruptor bescii (strain ATCC BAA-1888 / DSM 6725 / KCTC 15123 / Z-1320) (Anaerocellum thermophilum).